Consider the following 299-residue polypeptide: Kynurenine formamidase-like hydrolase fscH (299 aa).

An HGGXW motif is present at residues 48-52; that stretch reads HGGAW. A disordered region spans residues 90 to 110; the sequence is SPRTPSQPVPSGGHVGGEQQA. Residue Ser-142 is the Nucleophile of the active site.

The protein belongs to the kynurenine formamidase family.

It participates in secondary metabolite biosynthesis. Functionally, kynurenine formamidase-like hydrolase; part of the fragmented gene cluster that mediates the biosynthesis of fusarochromene, a tryptophan-derived metabolite closely related to a group of mycotoxins including fusarochromanone. Within the pathway, fscH converts the product of fscD into 4-hydroxykyrunenine. The first step of the pathway is the epimerization of L-tryptophan to D-tryptophan in the presence of the NRPS-like tryptophan epimerase fscC. D-tryptophan is subsequently hydroxylated by the tryptophan 6-hydroxylase fscE to yield 6-hydroxytryptophan. The pyrrole ring undergoes cleavaged by the tryptophan 2,3-dioxygenase fscD and is finally converted to 4-hydroxykyrunenine by the hydrolase fscH. The NRPS-like oxidoreductase fscA reduces the carboxyl group to primary alcohol and the DMATS-type prenyltransferase fscG performs prenylation, followed by the formation of a chromene ring catalyzed by the oxidoreductase fscI, which leads to desacetylfusarochromene. Epoxidation by fscF and rearrangement reactions of chromene double bonds convert compound desacetylfusarochromene to fusarochromanones. Although specific acetyltransferases were not found near the fsc gene cluster, several predicted enzymes containing the N-acetyltransferase superfamily domain are present in the genome of F.equiseti. These predicted enzymes may have the potential to convert desacetylfusarochromene to fusarochromene. The polypeptide is Kynurenine formamidase-like hydrolase fscH (Fusarium equiseti (Fusarium scirpi)).